The chain runs to 547 residues: Germacrene A synthase (547 aa).

Residues D300, D304, D443, and E451 each contribute to the Mg(2+) site. Positions 300 to 304 (DDTYD) match the DDXXD motif motif.

It belongs to the terpene synthase family. Tpsa subfamily. Requires Mg(2+) as cofactor. Mn(2+) is required as a cofactor. In terms of tissue distribution, expressed in leaves.

The protein resides in the plastid. It is found in the chloroplast. The enzyme catalyses (2E,6E)-farnesyl diphosphate = germacrene A + diphosphate. It carries out the reaction (2E,6E)-farnesyl diphosphate = (1S,2S,4R)-beta-elemene + diphosphate. The protein operates within secondary metabolite biosynthesis; terpenoid biosynthesis. Its function is as follows. Sesquiterpene synthase involved in the biosynthesis of volatile compounds widely used in aromatherapy and folk medicine, and present in culinary herbs. Mediates the conversion of (2E,6E)-farnesyl diphosphate (FPP) into germacrene A and beta-elemene. Not able to use (2E)-geranyl diphosphate (GPP) as substrate. The polypeptide is Germacrene A synthase (Lavandula pedunculata subsp. lusitanica (French lavender)).